The sequence spans 328 residues: Lateral signaling target 1 protein (328 aa).

Disordered stretches follow at residues 56–78, 108–135, and 177–200; these read SSQD…GLRS, PTHY…SASS, and PVQP…RLNG. Residues 178-200 are compositionally biased toward polar residues; sequence VQPSTSTSRNNVSQISGSSRLNG.

Interacts with fbf-2; the interaction probably mediates the release of the C-terminal tail of fbf-2 from the RNA-binding domain, thereby altering its RNA-binding affinity.

Functionally, plays a role in germline stem cell maintenance, perhaps acting in concert with mRNA-binding factor fbf-2. May regulate fbf-2 by modulating RNA-binding and perhaps by competition with the intramolecular interaction between the fbf-2 RNA-binding domain and C-terminal tail. The sequence is that of Lateral signaling target 1 protein from Caenorhabditis elegans.